The following is a 163-amino-acid chain: Protein EARLY RESPONSIVE TO DEHYDRATION 15 (163 aa).

A PAM2-like motif is present at residues 10 to 20; the sequence is TLNPDAPLFIP. The tract at residues 118-163 is disordered; sequence NGEMVKKSSGNRSPRSIVEPAKYAEKPAKWGNQRVAAAPRNIHQPR.

In terms of assembly, interacts with PAB2, PAB4 and PAB8. Interacts with MPC. Expressed in cauline leaves, stems, rosette leaves, immature siliques and primary inflorescences.

It is found in the cytoplasm. Functionally, central component of stress responses that interacts with poly(A)-binding proteins. Negative regulator of abscisic acid (ABA) responses, including resistance to drought and freezing as well as stomatal closure regulation. Mediates resistance to the bacterial necrotroph pathogen Erwinia carotovora subsp. carotovora and promotes the induction of marker genes for systemic acquired resistance (SAR). This is Protein EARLY RESPONSIVE TO DEHYDRATION 15 (ERD15) from Arabidopsis thaliana (Mouse-ear cress).